A 118-amino-acid chain; its full sequence is Small ribosomal subunit protein uS13 (118 aa).

Residues 94–118 (SLPLRGQRTKTNARTRKGPRKPIKK) form a disordered region.

Belongs to the universal ribosomal protein uS13 family. In terms of assembly, part of the 30S ribosomal subunit. Forms a loose heterodimer with protein S19. Forms two bridges to the 50S subunit in the 70S ribosome.

Located at the top of the head of the 30S subunit, it contacts several helices of the 16S rRNA. In the 70S ribosome it contacts the 23S rRNA (bridge B1a) and protein L5 of the 50S subunit (bridge B1b), connecting the 2 subunits; these bridges are implicated in subunit movement. Contacts the tRNAs in the A and P-sites. This chain is Small ribosomal subunit protein uS13, found in Alteromonas mediterranea (strain DSM 17117 / CIP 110805 / LMG 28347 / Deep ecotype).